The following is a 456-amino-acid chain: Bifunctional protein GlmU (456 aa).

Residues 1–229 (MSSHAMSVVI…LSEVEGVNNR (229 aa)) form a pyrophosphorylase region. UDP-N-acetyl-alpha-D-glucosamine contacts are provided by residues 11-14 (LAAG), Lys25, Gln76, 81-82 (GT), 103-105 (YGD), Gly140, Glu154, Asn169, and Asn227. Mg(2+) is bound at residue Asp105. Asn227 is a binding site for Mg(2+). Residues 230-250 (LQLARLEHVYQAEQAEKLLLA) are linker. Positions 251–456 (GVMLRDPARF…QGWRRPVKKK (206 aa)) are N-acetyltransferase. The UDP-N-acetyl-alpha-D-glucosamine site is built by Arg333 and Lys351. Catalysis depends on His363, which acts as the Proton acceptor. The UDP-N-acetyl-alpha-D-glucosamine site is built by Tyr366 and Asn377. Residues Ala380, 386–387 (NY), Ser405, Ala423, and Arg440 each bind acetyl-CoA.

It in the N-terminal section; belongs to the N-acetylglucosamine-1-phosphate uridyltransferase family. The protein in the C-terminal section; belongs to the transferase hexapeptide repeat family. In terms of assembly, homotrimer. The cofactor is Mg(2+).

It localises to the cytoplasm. The catalysed reaction is alpha-D-glucosamine 1-phosphate + acetyl-CoA = N-acetyl-alpha-D-glucosamine 1-phosphate + CoA + H(+). The enzyme catalyses N-acetyl-alpha-D-glucosamine 1-phosphate + UTP + H(+) = UDP-N-acetyl-alpha-D-glucosamine + diphosphate. The protein operates within nucleotide-sugar biosynthesis; UDP-N-acetyl-alpha-D-glucosamine biosynthesis; N-acetyl-alpha-D-glucosamine 1-phosphate from alpha-D-glucosamine 6-phosphate (route II): step 2/2. Its pathway is nucleotide-sugar biosynthesis; UDP-N-acetyl-alpha-D-glucosamine biosynthesis; UDP-N-acetyl-alpha-D-glucosamine from N-acetyl-alpha-D-glucosamine 1-phosphate: step 1/1. It functions in the pathway bacterial outer membrane biogenesis; LPS lipid A biosynthesis. In terms of biological role, catalyzes the last two sequential reactions in the de novo biosynthetic pathway for UDP-N-acetylglucosamine (UDP-GlcNAc). The C-terminal domain catalyzes the transfer of acetyl group from acetyl coenzyme A to glucosamine-1-phosphate (GlcN-1-P) to produce N-acetylglucosamine-1-phosphate (GlcNAc-1-P), which is converted into UDP-GlcNAc by the transfer of uridine 5-monophosphate (from uridine 5-triphosphate), a reaction catalyzed by the N-terminal domain. This is Bifunctional protein GlmU from Cronobacter sakazakii (strain ATCC BAA-894) (Enterobacter sakazakii).